A 330-amino-acid polypeptide reads, in one-letter code: Exostosin-like 2 (330 aa).

At 1 to 22 (MRCCHICKLPGRVMGIRVLRLS) the chain is on the cytoplasmic side. A helical; Signal-anchor for type II membrane protein transmembrane segment spans residues 23-43 (LVVILVLLLVAGALTALLPSV). Residues 44–330 (KEDKMLMLRR…FPYANYKRKI (287 aa)) are Lumenal-facing. Gln71 serves as a coordination point for UDP-N-acetyl-alpha-D-galactosamine. Position 71 (Gln71) interacts with UDP-N-acetyl-alpha-D-glucosamine. Asn74 carries N-linked (GlcNAc...) asparagine glycosylation. Residues Arg75, Asn100, Asn129, Arg134, Asp150, Asp151, Asp152, and Asp244 each contribute to the UDP-N-acetyl-alpha-D-galactosamine site. UDP-N-acetyl-alpha-D-glucosamine contacts are provided by Arg75, Asn100, Asn129, Arg134, Asp150, Asp151, Asp152, Asp244, Asp245, and Arg293. Mn(2+) is bound at residue Asp152. Cysteines 243 and 296 form a disulfide. Asp245 is a catalytic residue. Residue Arg293 coordinates UDP-N-acetyl-alpha-D-galactosamine.

This sequence belongs to the glycosyltransferase 47 family. Mn(2+) is required as a cofactor. The soluble form derives from the membrane form by proteolytic processing. Ubiquitous.

Its subcellular location is the endoplasmic reticulum membrane. It is found in the secreted. The enzyme catalyses 3-O-(beta-D-GlcA-(1-&gt;3)-beta-D-Gal-(1-&gt;3)-beta-D-Gal-(1-&gt;4)-beta-D-Xyl)-L-seryl-[protein] + UDP-N-acetyl-alpha-D-glucosamine = 3-O-(alpha-D-GlcNAc-(1-&gt;4)-beta-D-GlcA-(1-&gt;3)-beta-D-Gal-(1-&gt;3)-beta-D-Gal-(1-&gt;4)-beta-D-Xyl)-L-seryl-[protein] + UDP + H(+). Its pathway is glycan metabolism; heparan sulfate biosynthesis. In terms of biological role, glycosyltransferase required for the biosynthesis of heparan-sulfate and responsible for the alternating addition of beta-1-4-linked glucuronic acid (GlcA) and alpha-1-4-linked N-acetylglucosamine (GlcNAc) units to nascent heparan sulfate chains. In Homo sapiens (Human), this protein is Exostosin-like 2 (EXTL2).